The primary structure comprises 181 residues: Probable Brix domain-containing ribosomal biogenesis protein (181 aa).

The Brix domain occupies 5–181; the sequence is CKVIITTSRE…RIKKVVYRHV (177 aa).

In terms of biological role, probably involved in the biogenesis of the ribosome. The polypeptide is Probable Brix domain-containing ribosomal biogenesis protein (Pyrobaculum aerophilum (strain ATCC 51768 / DSM 7523 / JCM 9630 / CIP 104966 / NBRC 100827 / IM2)).